A 382-amino-acid polypeptide reads, in one-letter code: Telomere-binding protein OPG082 (382 aa).

Belongs to the orthopoxvirus OPG082 family.

It localises to the virion. In terms of biological role, binds to the hairpin form of the viral telomeric sequence. Might direct genome encapsidation into the virus particle. This Variola virus (isolate Human/India/Ind3/1967) (VARV) protein is Telomere-binding protein OPG082 (OPG082).